We begin with the raw amino-acid sequence, 188 residues long: MLVLASASPRRREILSRFIREFQIIPSSASEECSIADPREHALELARRKAREVYERLGKKATVIGADTVVSIGGKILGKPGNEEEAFRMLKTLSGRMHLVTTGYCIIHRGEEHCGAVVTEVKFRELDEDLIWAYIRTGEPMDKAGAYGIQGKGGLFVEWIRGDYYNVVGFPIEIIWKLKELGFDVLSR.

Residue Asp67 is the Proton acceptor of the active site.

This sequence belongs to the Maf family. YhdE subfamily. A divalent metal cation is required as a cofactor.

Its subcellular location is the cytoplasm. The catalysed reaction is dTTP + H2O = dTMP + diphosphate + H(+). The enzyme catalyses UTP + H2O = UMP + diphosphate + H(+). Nucleoside triphosphate pyrophosphatase that hydrolyzes dTTP and UTP. May have a dual role in cell division arrest and in preventing the incorporation of modified nucleotides into cellular nucleic acids. The protein is dTTP/UTP pyrophosphatase of Thermococcus kodakarensis (strain ATCC BAA-918 / JCM 12380 / KOD1) (Pyrococcus kodakaraensis (strain KOD1)).